Reading from the N-terminus, the 227-residue chain is MTAIAPVITIDGPSGAGKGTLCKAMAEALQWHLLDSGAIYRVLALAALHHHVDVTSEDALVPLASHLDVRFVSTNGNLEVILEGEDVSGEIRTQEVANAASQVAAFPRVREALLRRQRAFRDAPGLIADGRDMGTVVFPDAPVKIFLDASSEERAHRRMLQLQEKGFSVNFERLLAEIKERDDRDRNRAVAPLVPAADALVLDSTRLSIEQVIEKALQYARQKLALA.

ATP is bound at residue 12-20 (GPSGAGKGT).

This sequence belongs to the cytidylate kinase family. Type 1 subfamily.

It localises to the cytoplasm. The catalysed reaction is CMP + ATP = CDP + ADP. It catalyses the reaction dCMP + ATP = dCDP + ADP. In Citrobacter koseri (strain ATCC BAA-895 / CDC 4225-83 / SGSC4696), this protein is Cytidylate kinase.